Reading from the N-terminus, the 364-residue chain is Alanine racemase (364 aa).

Lysine 34 acts as the Proton acceptor; specific for D-alanine in catalysis. N6-(pyridoxal phosphate)lysine is present on lysine 34. Arginine 129 contacts substrate. Catalysis depends on tyrosine 259, which acts as the Proton acceptor; specific for L-alanine. Residue methionine 307 coordinates substrate.

This sequence belongs to the alanine racemase family. Requires pyridoxal 5'-phosphate as cofactor.

It carries out the reaction L-alanine = D-alanine. It functions in the pathway amino-acid biosynthesis; D-alanine biosynthesis; D-alanine from L-alanine: step 1/1. Functionally, catalyzes the interconversion of L-alanine and D-alanine. May also act on other amino acids. This is Alanine racemase (alr) from Coxiella burnetii (strain Dugway 5J108-111).